Consider the following 330-residue polypeptide: (4-{4-[2-(gamma-L-glutamylamino)ethyl]phenoxymethyl}furan-2-yl)methanamine synthase (330 aa).

The protein belongs to the MfnF family.

It catalyses the reaction gamma-L-glutamyltyramine + [5-(aminomethyl)furan-3-yl]methyl diphosphate = (4-{4-[2-(gamma-L-glutamylamino)ethyl]phenoxymethyl}furan-2-yl)methanamine + diphosphate. The protein operates within cofactor biosynthesis; methanofuran biosynthesis. In terms of biological role, catalyzes the condensation between 5-(aminomethyl)-3-furanmethanol diphosphate (F1-PP) and gamma-glutamyltyramine to produce APMF-Glu. This is (4-{4-[2-(gamma-L-glutamylamino)ethyl]phenoxymethyl}furan-2-yl)methanamine synthase from Methanocaldococcus jannaschii (strain ATCC 43067 / DSM 2661 / JAL-1 / JCM 10045 / NBRC 100440) (Methanococcus jannaschii).